A 251-amino-acid chain; its full sequence is Insulin-induced gene 1 protein (251 aa).

Over 1-58 (MPRLEEHCWSCSCSTSVKTKDLSSAGWIVCKTGEMMSIITSVLSHAYGSLHSLQSANL) the chain is Cytoplasmic. Residues 59–81 (IRRGLVLFIVGVVLALVLNLLQI) traverse the membrane as a helical segment. Residues 82–100 (QRNVTLFPEEVLDTLFSSA) are Extracellular-facing. Residues 101-118 (WWIPLCCGTAAAVVGLLY) form a helical membrane-spanning segment. Topologically, residues 119–133 (PCLDHHLGEPHKFKR) are cytoplasmic. Residues 134–156 (EWASVMRCIAVFVGINHASAKLD) traverse the membrane as a helical segment. Residues 157–159 (FAN) lie on the Extracellular side of the membrane. The helical transmembrane segment at 160–178 (NVQLSLTLAALSLGLWWTF) threads the bilayer. The Cytoplasmic segment spans residues 179 to 183 (DRSRS). Residues 184–205 (GFGLGLTTALLATLIAQLLVYN) traverse the membrane as a helical segment. The Extracellular segment spans residues 206 to 219 (GIYQYTSPDFLYVR). A helical transmembrane segment spans residues 220–237 (SWLPCIFFSGGVTVGNIG). Topologically, residues 238 to 251 (RQLAMGSTEKIHND) are cytoplasmic. A KxHxx motif is present at residues 245–251 (TEKIHND).

Belongs to the INSIG family. Interacts with scap; interaction is direct and only takes place in the presence of sterols; it prevents interaction between scap and the coat protein complex II (COPII). Associates with the SCAP-SREBP complex; association is mediated via its interaction with scap and only takes place in the presence of sterols.

The protein localises to the endoplasmic reticulum membrane. In terms of biological role, oxysterol-binding protein that mediates feedback control of cholesterol synthesis by controlling both endoplasmic reticulum to Golgi transport of scap and degradation of hmgcr. Acts as a negative regulator of cholesterol biosynthesis by mediating the retention of the SCAP-SREBP complex in the endoplasmic reticulum, thereby blocking the processing of sterol regulatory element-binding proteins (SREBPs). Binds oxysterol, including 25-hydroxycholesterol, regulating interaction with scap and retention of the SCAP-SREBP complex in the endoplasmic reticulum. In presence of oxysterol, interacts with scap, retaining the SCAP-SREBP complex in the endoplasmic reticulum, thereby preventing scap from escorting SREBPs to the Golgi. Sterol deprivation reduces oxysterol-binding, disrupting the interaction between insig1 and scap, thereby promoting Golgi transport of the SCAP-SREBP complex, followed by processing and nuclear translocation of SREBPs. Also regulates cholesterol synthesis by regulating degradation of hmgcr. The polypeptide is Insulin-induced gene 1 protein (Danio rerio (Zebrafish)).